A 133-amino-acid polypeptide reads, in one-letter code: uncharacterized protein (133 aa).

The segment at 44-79 (VENQLASSKTEEQTLKISKKSNLNPAQKSSTFGLEN) is disordered. Over residues 63-79 (KSNLNPAQKSSTFGLEN) the composition is skewed to polar residues.

The protein localises to the plastid. It localises to the chloroplast. This is an uncharacterized protein from Chlorella vulgaris (Green alga).